Here is a 419-residue protein sequence, read N- to C-terminus: UDP-N-acetylglucosamine 1-carboxyvinyltransferase (419 aa).

22-23 (KN) contacts phosphoenolpyruvate. R95 is a binding site for UDP-N-acetyl-alpha-D-glucosamine. C119 serves as the catalytic Proton donor. C119 is subject to 2-(S-cysteinyl)pyruvic acid O-phosphothioketal. UDP-N-acetyl-alpha-D-glucosamine is bound by residues D308 and I330.

This sequence belongs to the EPSP synthase family. MurA subfamily.

It localises to the cytoplasm. It catalyses the reaction phosphoenolpyruvate + UDP-N-acetyl-alpha-D-glucosamine = UDP-N-acetyl-3-O-(1-carboxyvinyl)-alpha-D-glucosamine + phosphate. It participates in cell wall biogenesis; peptidoglycan biosynthesis. Functionally, cell wall formation. Adds enolpyruvyl to UDP-N-acetylglucosamine. The protein is UDP-N-acetylglucosamine 1-carboxyvinyltransferase of Rickettsia bellii (strain OSU 85-389).